The primary structure comprises 275 residues: Formamidopyrimidine-DNA glycosylase (275 aa).

The active-site Schiff-base intermediate with DNA is Pro-2. Glu-3 (proton donor) is an active-site residue. Lys-58 functions as the Proton donor; for beta-elimination activity in the catalytic mechanism. DNA contacts are provided by His-93, Arg-111, and Arg-156. Residues 241-275 (FVYDRAGQPCRVCGTPVRQIVQGQRSTYFCPTCQR) form an FPG-type zinc finger. The active-site Proton donor; for delta-elimination activity is Arg-265.

The protein belongs to the FPG family. As to quaternary structure, monomer. The cofactor is Zn(2+).

The catalysed reaction is Hydrolysis of DNA containing ring-opened 7-methylguanine residues, releasing 2,6-diamino-4-hydroxy-5-(N-methyl)formamidopyrimidine.. It carries out the reaction 2'-deoxyribonucleotide-(2'-deoxyribose 5'-phosphate)-2'-deoxyribonucleotide-DNA = a 3'-end 2'-deoxyribonucleotide-(2,3-dehydro-2,3-deoxyribose 5'-phosphate)-DNA + a 5'-end 5'-phospho-2'-deoxyribonucleoside-DNA + H(+). Its function is as follows. Involved in base excision repair of DNA damaged by oxidation or by mutagenic agents. Acts as a DNA glycosylase that recognizes and removes damaged bases. Has a preference for oxidized purines, such as 7,8-dihydro-8-oxoguanine (8-oxoG). Has AP (apurinic/apyrimidinic) lyase activity and introduces nicks in the DNA strand. Cleaves the DNA backbone by beta-delta elimination to generate a single-strand break at the site of the removed base with both 3'- and 5'-phosphates. The sequence is that of Formamidopyrimidine-DNA glycosylase from Burkholderia cenocepacia (strain HI2424).